The chain runs to 313 residues: Porphobilinogen deaminase (313 aa).

Cys-242 bears the S-(dipyrrolylmethanemethyl)cysteine mark.

The protein belongs to the HMBS family. In terms of assembly, monomer. The cofactor is dipyrromethane.

The catalysed reaction is 4 porphobilinogen + H2O = hydroxymethylbilane + 4 NH4(+). Its pathway is porphyrin-containing compound metabolism; protoporphyrin-IX biosynthesis; coproporphyrinogen-III from 5-aminolevulinate: step 2/4. Functionally, tetrapolymerization of the monopyrrole PBG into the hydroxymethylbilane pre-uroporphyrinogen in several discrete steps. This Pseudomonas fluorescens (strain SBW25) protein is Porphobilinogen deaminase.